The sequence spans 278 residues: 3-methyl-2-oxobutanoate hydroxymethyltransferase (278 aa).

Positions 43 and 82 each coordinate Mg(2+). 3-methyl-2-oxobutanoate-binding positions include D43 to S44, D82, and K112. Residue E114 participates in Mg(2+) binding. E181 functions as the Proton acceptor in the catalytic mechanism.

Belongs to the PanB family. Homodecamer; pentamer of dimers. Mg(2+) is required as a cofactor.

Its subcellular location is the cytoplasm. It catalyses the reaction 3-methyl-2-oxobutanoate + (6R)-5,10-methylene-5,6,7,8-tetrahydrofolate + H2O = 2-dehydropantoate + (6S)-5,6,7,8-tetrahydrofolate. It participates in cofactor biosynthesis; (R)-pantothenate biosynthesis; (R)-pantoate from 3-methyl-2-oxobutanoate: step 1/2. In terms of biological role, catalyzes the reversible reaction in which hydroxymethyl group from 5,10-methylenetetrahydrofolate is transferred onto alpha-ketoisovalerate to form ketopantoate. The polypeptide is 3-methyl-2-oxobutanoate hydroxymethyltransferase (Bacillus cereus (strain ATCC 10987 / NRS 248)).